The chain runs to 602 residues: Elongation factor 4 (602 aa).

In terms of domain architecture, tr-type G spans 7–189 (KYIRNFSIVA…AIVNKVPAPE (183 aa)). GTP is bound by residues 19–24 (DHGKST) and 136–139 (NKID).

The protein belongs to the TRAFAC class translation factor GTPase superfamily. Classic translation factor GTPase family. LepA subfamily.

Its subcellular location is the cell membrane. It catalyses the reaction GTP + H2O = GDP + phosphate + H(+). Required for accurate and efficient protein synthesis under certain stress conditions. May act as a fidelity factor of the translation reaction, by catalyzing a one-codon backward translocation of tRNAs on improperly translocated ribosomes. Back-translocation proceeds from a post-translocation (POST) complex to a pre-translocation (PRE) complex, thus giving elongation factor G a second chance to translocate the tRNAs correctly. Binds to ribosomes in a GTP-dependent manner. This chain is Elongation factor 4, found in Clostridium botulinum (strain Okra / Type B1).